The sequence spans 567 residues: Zinc finger protein 512 (567 aa).

The disordered stretch occupies residues 1–32; it reads MSSRLGAVPATSGPTTFKQQRSTRIVGAKNSR. Residues 12–23 show a composition bias toward polar residues; that stretch reads SGPTTFKQQRST. Glycyl lysine isopeptide (Lys-Gly) (interchain with G-Cter in SUMO2) cross-links involve residues K18 and K84. The tract at residues 86–148 is disordered; that stretch reads AATSHVEGSG…QARRIRKEPP (63 aa). Positions 119 to 130 are enriched in basic residues; the sequence is KKHKLYGRKQRP. The C2H2-type 1 zinc-finger motif lies at 197-220; that stretch reads FTCHHCGKQLRSLAGMKYHVMANH. Residue K227 forms a Glycyl lysine isopeptide (Lys-Gly) (interchain with G-Cter in SUMO2) linkage. The C2H2-type 2 zinc-finger motif lies at 287–310; sequence LKCHHCGKPYRSKAGLAYHLRSEH. K333 is covalently cross-linked (Glycyl lysine isopeptide (Lys-Gly) (interchain with G-Cter in SUMO2)). The C2H2-type 3; atypical zinc finger occupies 406 to 430; it reads IQCPNQGCEAVYSSVSGLKAHLGSC. The C2H2-type 4 zinc-finger motif lies at 440 to 463; sequence YKCLLCQKEFVSESGVKYHINSVH. The segment at 486–567 is disordered; sequence QRQQEEEKRR…PKTNHKRGRK (82 aa). The segment covering 495–508 has biased composition (basic residues); sequence RQQHRSRRSLRRRQ. Positions 523–532 are enriched in basic and acidic residues; it reads VGKDQRRNNE. The segment covering 556 to 567 has biased composition (basic residues); it reads KPPKTNHKRGRK.

It belongs to the krueppel C2H2-type zinc-finger protein family.

Its subcellular location is the nucleus. In terms of biological role, may be involved in transcriptional regulation. The protein is Zinc finger protein 512 (ZNF512) of Homo sapiens (Human).